Consider the following 82-residue polypeptide: SGHHDETTDEPSESSKPCCDQCSCTKSMPPKCRCSDIRLNSCHSACKSCACTYSIPAKCFCTDINDFCYEPCKSSRDDDWDN.

The disordered stretch occupies residues 1–24 (SGHHDETTDEPSESSKPCCDQCSC). Cystine bridges form between C18–C72, C19–C34, C22–C68, C24–C32, C42–C49, C46–C61, and C51–C59.

The protein belongs to the Bowman-Birk serine protease inhibitor family.

Trypsin and chymotrypsin are inhibited simultaneously. There are two separate reactive sites for trypsin and chymotrypsin but they do not inhibit simultaneously. This Phaseolus angularis (Azuki bean) protein is Bowman-Birk type proteinase inhibitor.